The following is a 409-amino-acid chain: Pentatricopeptide repeat-containing protein At5g09450, mitochondrial (409 aa).

The transit peptide at 1–38 (MATRSLFHSLRCRLTNNGVLGSNFIRNAESSRFSKSYN) directs the protein to the mitochondrion. PPR repeat units follow at residues 155–189 (TAETYTSLLHAYAASKQTERAEALFKRIIESDSLT), 191–225 (GAITYNEMMTLYMSVGQVEKVPEVIEVLKQKKVSP), 226–256 (DIFTYNLWLSSCAATFNIDELRKILEEMRHD), 262–296 (GWVRYIDLTSIYINSSRVTNAESTLPVEAEKSISQ), 298–332 (EWITYDFLMILHTGLGNKVMIDQIWKSLRNTNQIL), and 333–367 (SSRSYICVLSSYLMLGHLREAEEIIHQWKESKTTE).

The protein belongs to the PPR family. P subfamily.

The protein resides in the mitochondrion. The polypeptide is Pentatricopeptide repeat-containing protein At5g09450, mitochondrial (Arabidopsis thaliana (Mouse-ear cress)).